The following is a 122-amino-acid chain: Large ribosomal subunit protein uL14 (122 aa).

The protein belongs to the universal ribosomal protein uL14 family. Part of the 50S ribosomal subunit. Forms a cluster with proteins L3 and L19. In the 70S ribosome, L14 and L19 interact and together make contacts with the 16S rRNA in bridges B5 and B8.

Functionally, binds to 23S rRNA. Forms part of two intersubunit bridges in the 70S ribosome. The protein is Large ribosomal subunit protein uL14 of Janthinobacterium sp. (strain Marseille) (Minibacterium massiliensis).